Here is a 249-residue protein sequence, read N- to C-terminus: MSAPTGPSIDAREVARFERIAATWWDEAGPMRVLHRFNPVRLAYIRDAACRHHGRDPLGPEPLAGLTLVDIGCGGGVLSEPLARLGARVTGLDPAPTNIRVAKAHAEEAGVPVDYRPQTIESVVAAGERFDLVVAMEVVEHVADMASFVRTACAAVRPGGLFFAATINRTMRSFALAIVGAEYVLGWLPRGTHDWEKFVTPEELARAVESGGLVVADTTGVVYHPLSGRWSAARDTAVNYMITAERPAA.

Residues arginine 41, glycine 72, aspartate 93, and methionine 136 each contribute to the S-adenosyl-L-methionine site.

This sequence belongs to the methyltransferase superfamily. UbiG/COQ3 family.

It catalyses the reaction a 3-demethylubiquinol + S-adenosyl-L-methionine = a ubiquinol + S-adenosyl-L-homocysteine + H(+). The catalysed reaction is a 3-(all-trans-polyprenyl)benzene-1,2-diol + S-adenosyl-L-methionine = a 2-methoxy-6-(all-trans-polyprenyl)phenol + S-adenosyl-L-homocysteine + H(+). The protein operates within cofactor biosynthesis; ubiquinone biosynthesis. In terms of biological role, O-methyltransferase that catalyzes the 2 O-methylation steps in the ubiquinone biosynthetic pathway. In Methylobacterium sp. (strain 4-46), this protein is Ubiquinone biosynthesis O-methyltransferase.